The sequence spans 78 residues: Mambalgin-1 (78 aa).

A signal peptide spans 1–21; sequence MKTLLLTLLVVTIVCLDLGYS. Disulfide bonds link Cys-24-Cys-40, Cys-33-Cys-58, Cys-62-Cys-70, and Cys-71-Cys-76.

It belongs to the three-finger toxin family. Short-chain subfamily. Mambalgin sub-subfamily. As to expression, expressed by the venom gland.

It localises to the secreted. Its function is as follows. This three-finger toxin inhibits ASIC channels. It acts as a gating modifier toxin by decreasing the apparent proton sensitivity of activation and by slightly increasing the apparent proton sensitivity for inactivation. It binds more tightly to the closed state and to a much lesser extent the inactivated/desensitized state of ASIC1a isoform of ASIC1. It interacts directly with the outside surface of the thumb domain of chicken ASIC1a (ASIC1a), but does not insert into the acidic pocket as suggested for mambalgin-2. This binding leads to relocation of the thumb domain that could disrupt the acidic pocket of cASIC1a. It reversibly inhibits rat ASIC1a (IC(50)=3.4-55 nM), rat ASIC1a-ASIC2b (IC(50)=61 nM), rat ASIC1a-ASIC1b (IC(50)=72 nM), human ASIC1a (IC(50)=127-580 nM), chicken ASIC1a (IC(50)=123.6 nM), rat ASIC1b (IC(50)=22.2-203 nM), rat ASIC1a-ASIC2a (IC(50)=152-252 nM). In vivo, it shows a potent naloxone-resistant analgesic effect against acute and inflammatory pain upon central and peripheral injection. In addition, it also has an opioid-independent effect on both thermal and mechanical inflammatory pain after systemic administration and is effective against neuropathic pain. This is Mambalgin-1 from Dendroaspis polylepis polylepis (Black mamba).